A 461-amino-acid polypeptide reads, in one-letter code: Fumarate hydratase class II (461 aa).

Substrate is bound by residues 98–100 (SGT), 129–132 (HPND), 139–141 (SSN), and Thr187. His188 acts as the Proton donor/acceptor in catalysis. Ser318 is a catalytic residue. Substrate-binding positions include Ser319 and 324 to 326 (KVN).

This sequence belongs to the class-II fumarase/aspartase family. Fumarase subfamily. Homotetramer.

Its subcellular location is the cytoplasm. It carries out the reaction (S)-malate = fumarate + H2O. The protein operates within carbohydrate metabolism; tricarboxylic acid cycle; (S)-malate from fumarate: step 1/1. Its function is as follows. Involved in the TCA cycle. Catalyzes the stereospecific interconversion of fumarate to L-malate. The sequence is that of Fumarate hydratase class II from Rickettsia prowazekii (strain Madrid E).